We begin with the raw amino-acid sequence, 221 residues long: PKHD-type hydroxylase P9211_12561 (221 aa).

The Fe2OG dioxygenase domain occupies 80 to 174; that stretch reads KVHGTMFTRS…RIVCVGWIQS (95 aa). Fe cation contacts are provided by histidine 98, aspartate 100, and histidine 155. A 2-oxoglutarate-binding site is contributed by arginine 165.

Fe(2+) is required as a cofactor. Requires L-ascorbate as cofactor.

This is PKHD-type hydroxylase P9211_12561 from Prochlorococcus marinus (strain MIT 9211).